Reading from the N-terminus, the 188-residue chain is Putative manganese efflux pump MntP (188 aa).

6 consecutive transmembrane segments (helical) span residues 3-23 (ISAT…ASIG), 41-61 (LIFG…GMLA), 62-82 (SQFI…FLGG), 106-128 (WILV…GLAF), 143-163 (ATLI…PLLG), and 168-188 (ILGG…HFAG).

This sequence belongs to the MntP (TC 9.B.29) family.

It localises to the cell inner membrane. In terms of biological role, probably functions as a manganese efflux pump. The chain is Putative manganese efflux pump MntP from Enterobacter sp. (strain 638).